We begin with the raw amino-acid sequence, 601 residues long: Aspartate--tRNA(Asp/Asn) ligase (601 aa).

Glu187 is a binding site for L-aspartate. Positions 211–214 (QQFK) are aspartate. 2 residues coordinate L-aspartate: Arg233 and His461. Position 233 to 235 (233 to 235 (RDE)) interacts with ATP. Glu495 serves as a coordination point for ATP. An L-aspartate-binding site is contributed by Arg502. 547–550 (GLDR) is a binding site for ATP.

This sequence belongs to the class-II aminoacyl-tRNA synthetase family. Type 1 subfamily. Homodimer.

It is found in the cytoplasm. It catalyses the reaction tRNA(Asx) + L-aspartate + ATP = L-aspartyl-tRNA(Asx) + AMP + diphosphate. Functionally, aspartyl-tRNA synthetase with relaxed tRNA specificity since it is able to aspartylate not only its cognate tRNA(Asp) but also tRNA(Asn). Reaction proceeds in two steps: L-aspartate is first activated by ATP to form Asp-AMP and then transferred to the acceptor end of tRNA(Asp/Asn). The chain is Aspartate--tRNA(Asp/Asn) ligase from Pelodictyon phaeoclathratiforme (strain DSM 5477 / BU-1).